The sequence spans 473 residues: GTPase Der (473 aa).

EngA-type G domains are found at residues 3-167 (FTVA…GEDR) and 203-378 (LRVA…KVWN). Residues 9–16 (GRPNVGKS), 56–60 (DTAGL), 119–122 (NKSE), 209–216 (GRPNAGKS), 256–260 (DTAGM), and 321–324 (NKWD) contribute to the GTP site. Residues 379–463 (KRISTARLNR…PIRIHFRSPD (85 aa)) enclose the KH-like domain.

Belongs to the TRAFAC class TrmE-Era-EngA-EngB-Septin-like GTPase superfamily. EngA (Der) GTPase family. As to quaternary structure, associates with the 50S ribosomal subunit.

In terms of biological role, GTPase that plays an essential role in the late steps of ribosome biogenesis. The polypeptide is GTPase Der (Rhizobium johnstonii (strain DSM 114642 / LMG 32736 / 3841) (Rhizobium leguminosarum bv. viciae)).